The chain runs to 267 residues: Large ribosomal subunit protein uL3 (267 aa).

The segment at 124 to 147 (NQHIGPKSHGGGGGSQPVRQTGSL) is disordered.

Belongs to the universal ribosomal protein uL3 family. As to quaternary structure, part of the 50S ribosomal subunit. Forms a cluster with proteins L14 and L19.

In terms of biological role, one of the primary rRNA binding proteins, it binds directly near the 3'-end of the 23S rRNA, where it nucleates assembly of the 50S subunit. This is Large ribosomal subunit protein uL3 from Mycoplasmopsis agalactiae (strain NCTC 10123 / CIP 59.7 / PG2) (Mycoplasma agalactiae).